The sequence spans 252 residues: Imidazole glycerol phosphate synthase subunit HisF (252 aa).

Active-site residues include aspartate 11 and aspartate 130.

Belongs to the HisA/HisF family. Heterodimer of HisH and HisF.

Its subcellular location is the cytoplasm. The enzyme catalyses 5-[(5-phospho-1-deoxy-D-ribulos-1-ylimino)methylamino]-1-(5-phospho-beta-D-ribosyl)imidazole-4-carboxamide + L-glutamine = D-erythro-1-(imidazol-4-yl)glycerol 3-phosphate + 5-amino-1-(5-phospho-beta-D-ribosyl)imidazole-4-carboxamide + L-glutamate + H(+). It participates in amino-acid biosynthesis; L-histidine biosynthesis; L-histidine from 5-phospho-alpha-D-ribose 1-diphosphate: step 5/9. In terms of biological role, IGPS catalyzes the conversion of PRFAR and glutamine to IGP, AICAR and glutamate. The HisF subunit catalyzes the cyclization activity that produces IGP and AICAR from PRFAR using the ammonia provided by the HisH subunit. In Bacillus thuringiensis (strain Al Hakam), this protein is Imidazole glycerol phosphate synthase subunit HisF.